The chain runs to 136 residues: uncharacterized protein (136 aa).

This sequence to E.coli YcgX and YdfO.

This is an uncharacterized protein from Escherichia coli (strain K12).